The following is a 160-amino-acid chain: Glyoxalase domain-containing protein 5 (160 aa).

One can recognise a VOC domain in the interval 33-153; that stretch reads RLDHLVLTVR…DHNLIEVSNY (121 aa).

It belongs to the glyoxalase I family.

This chain is Glyoxalase domain-containing protein 5 (glod5), found in Xenopus laevis (African clawed frog).